A 265-amino-acid polypeptide reads, in one-letter code: NAD kinase 1 (265 aa).

Residue D45 is the Proton acceptor of the active site. Residues 45–46, 122–123, R148, D150, and A185 each bind NAD(+); these read DG and NE.

Belongs to the NAD kinase family. A divalent metal cation is required as a cofactor.

Its subcellular location is the cytoplasm. It catalyses the reaction NAD(+) + ATP = ADP + NADP(+) + H(+). In terms of biological role, involved in the regulation of the intracellular balance of NAD and NADP, and is a key enzyme in the biosynthesis of NADP. Catalyzes specifically the phosphorylation on 2'-hydroxyl of the adenosine moiety of NAD to yield NADP. The polypeptide is NAD kinase 1 (Bacillus anthracis).